Reading from the N-terminus, the 256-residue chain is Small ribosomal subunit protein eS1 (256 aa).

Positions 1–18 (MAVGKNKRLSKGKKGVKK) are enriched in basic residues. Residues 1-21 (MAVGKNKRLSKGKKGVKKRTV) form a disordered region. Ala2 carries the post-translational modification N-acetylalanine; partial.

It belongs to the eukaryotic ribosomal protein eS1 family. In terms of assembly, component of the small ribosomal subunit. Mature ribosomes consist of a small (40S) and a large (60S) subunit. The 40S subunit contains about 33 different proteins and 1 molecule of RNA (18S). The 60S subunit contains about 49 different proteins and 3 molecules of RNA (25S, 5.8S and 5S).

It localises to the cytoplasm. This is Small ribosomal subunit protein eS1 (rps1) from Neosartorya fischeri (strain ATCC 1020 / DSM 3700 / CBS 544.65 / FGSC A1164 / JCM 1740 / NRRL 181 / WB 181) (Aspergillus fischerianus).